Reading from the N-terminus, the 304-residue chain is Bifunctional protein FolD (304 aa).

NADP(+) is bound by residues 167-169 (GRS), S192, and I233.

It belongs to the tetrahydrofolate dehydrogenase/cyclohydrolase family. Homodimer.

It carries out the reaction (6R)-5,10-methylene-5,6,7,8-tetrahydrofolate + NADP(+) = (6R)-5,10-methenyltetrahydrofolate + NADPH. The catalysed reaction is (6R)-5,10-methenyltetrahydrofolate + H2O = (6R)-10-formyltetrahydrofolate + H(+). It functions in the pathway one-carbon metabolism; tetrahydrofolate interconversion. Its function is as follows. Catalyzes the oxidation of 5,10-methylenetetrahydrofolate to 5,10-methenyltetrahydrofolate and then the hydrolysis of 5,10-methenyltetrahydrofolate to 10-formyltetrahydrofolate. This is Bifunctional protein FolD from Rhodospirillum centenum (strain ATCC 51521 / SW).